The chain runs to 139 residues: uncharacterized protein (139 aa).

The next 2 membrane-spanning stretches (helical) occupy residues 35–55 and 57–77; these read LVFL…SFLI and FGIL…LTVI.

It localises to the membrane. This is an uncharacterized protein from Saccharomyces cerevisiae (strain ATCC 204508 / S288c) (Baker's yeast).